A 228-amino-acid polypeptide reads, in one-letter code: Leucyl/phenylalanyl-tRNA--protein transferase (228 aa).

Belongs to the L/F-transferase family.

The protein localises to the cytoplasm. The catalysed reaction is N-terminal L-lysyl-[protein] + L-leucyl-tRNA(Leu) = N-terminal L-leucyl-L-lysyl-[protein] + tRNA(Leu) + H(+). It carries out the reaction N-terminal L-arginyl-[protein] + L-leucyl-tRNA(Leu) = N-terminal L-leucyl-L-arginyl-[protein] + tRNA(Leu) + H(+). It catalyses the reaction L-phenylalanyl-tRNA(Phe) + an N-terminal L-alpha-aminoacyl-[protein] = an N-terminal L-phenylalanyl-L-alpha-aminoacyl-[protein] + tRNA(Phe). Functionally, functions in the N-end rule pathway of protein degradation where it conjugates Leu, Phe and, less efficiently, Met from aminoacyl-tRNAs to the N-termini of proteins containing an N-terminal arginine or lysine. The protein is Leucyl/phenylalanyl-tRNA--protein transferase of Lawsonia intracellularis (strain PHE/MN1-00).